The following is a 746-amino-acid chain: NAD(P)H-quinone oxidoreductase subunit 5, chloroplastic (746 aa).

A run of 16 helical transmembrane segments spans residues 9–29, 40–60, 89–109, 125–145, 147–167, 185–205, 221–241, 258–278, 280–300, 327–347, 354–374, 396–416, 425–445, 547–567, 608–628, and 723–743; these read WIIPFIPLPVPILLGVGLLLF, WTFLSIFLLSIVMIFSLYLSI, IDPLTSIMSILITTVGILVLI, FAYMGFFNTSMLGLVTSSNLI, VYFFWELVGMCSYLLIGFWFT, GDFGLLLGILGLYWITGSFEF, VNLLFLTLCAFLLFVGPIAKS, TPISALIHAATMVAAGIFLVA, LLPLFIVIPSIMYIISLIGII, LGYMMLALGMGSYRSALFHLI, ALLFLGSGSIIHSMEAIVGYS, TAFLIGTLSLCGIPPLACFWS, LLFSPIFAIIACSTAGLTAFY, ILFPMLILLLFTLFIGAIGIP, FSVSIAFFGIFIAYCLYKPFY, and YLFLYLSYVLIFLMILLFFYF.

The protein belongs to the complex I subunit 5 family. In terms of assembly, NDH is composed of at least 16 different subunits, 5 of which are encoded in the nucleus.

The protein resides in the plastid. The protein localises to the chloroplast thylakoid membrane. It carries out the reaction a plastoquinone + NADH + (n+1) H(+)(in) = a plastoquinol + NAD(+) + n H(+)(out). The enzyme catalyses a plastoquinone + NADPH + (n+1) H(+)(in) = a plastoquinol + NADP(+) + n H(+)(out). Functionally, NDH shuttles electrons from NAD(P)H:plastoquinone, via FMN and iron-sulfur (Fe-S) centers, to quinones in the photosynthetic chain and possibly in a chloroplast respiratory chain. The immediate electron acceptor for the enzyme in this species is believed to be plastoquinone. Couples the redox reaction to proton translocation, and thus conserves the redox energy in a proton gradient. The sequence is that of NAD(P)H-quinone oxidoreductase subunit 5, chloroplastic (ndhF) from Olimarabidopsis pumila (Dwarf rocket).